Reading from the N-terminus, the 126-residue chain is Large ribosomal subunit protein bL12 (126 aa).

It belongs to the bacterial ribosomal protein bL12 family. As to quaternary structure, homodimer. Part of the ribosomal stalk of the 50S ribosomal subunit. Forms a multimeric L10(L12)X complex, where L10 forms an elongated spine to which 2 to 4 L12 dimers bind in a sequential fashion. Binds GTP-bound translation factors.

In terms of biological role, forms part of the ribosomal stalk which helps the ribosome interact with GTP-bound translation factors. Is thus essential for accurate translation. The polypeptide is Large ribosomal subunit protein bL12 (Nocardia farcinica (strain IFM 10152)).